The chain runs to 204 residues: MGISRDSRHKRRLTGGKHPYTCKKRKYELGRQPAMTKIGGKLVRTVRVRGGNLKSRALRLESGNFAWGSEAFTSKSRILNVVYNASNNELVRTNTFVKGCIIQIDATPFRQYYHNHYGIDIGKKKAGDEESKFSKRHAGKQEKRCQTRLPLDEGIKELFQSGRLYASIASRPGQSGRADGYLLEGKELEFYAKAMQKKKKAGKS.

Belongs to the eukaryotic ribosomal protein eS8 family.

The polypeptide is Small ribosomal subunit protein eS8 (RPS8) (Griffithsia japonica (Red alga)).